A 322-amino-acid polypeptide reads, in one-letter code: D-specific alpha-keto acid dehydrogenase (322 aa).

Residues Gln-156–Ile-157, Thr-229–Arg-231, and Asp-255 each bind NAD(+). Arg-231 is a catalytic residue. The active site involves Glu-260. The Proton donor role is filled by His-292. Residue His-292–Tyr-295 participates in NAD(+) binding.

This sequence belongs to the D-isomer specific 2-hydroxyacid dehydrogenase family.

The enzyme catalyses a (2R)-2-hydroxycarboxylate + NADP(+) = a 2-oxocarboxylate + NADPH + H(+). It carries out the reaction a (2R)-2-hydroxycarboxylate + NAD(+) = a 2-oxocarboxylate + NADH + H(+). The catalysed reaction is (R)-lactate + NADP(+) = pyruvate + NADPH + H(+). It catalyses the reaction (R)-lactate + NAD(+) = pyruvate + NADH + H(+). The enzyme catalyses (2R)-hydroxybutanoate + NADP(+) = 2-oxobutanoate + NADPH + H(+). Functionally, required for high-level resistance to glycopeptide antibiotics. Catalyzes the reduction of 2-keto acids to 2-D-hydroxy acids, exhibiting highest catalytic efficiency with pyruvate and 2-oxobutanoate/alpha-ketobutyrate as substrates, producing D-lactate and (2R)-hydroxybutanoate, respectively. Together with D-alanine--D-lactate ligase VanA, gives rise to peptidoglycan precursors that terminate in the depsipeptide D-alanine-D-lactate rather than the dipeptide D-alanine-D-alanine thus preventing vancomycin binding. Shows a slight preference for NADPH over NADH as the electron donor. This Enterococcus faecium (Streptococcus faecium) protein is D-specific alpha-keto acid dehydrogenase.